Reading from the N-terminus, the 440-residue chain is UDP-N-acetylglucosamine 1-carboxyvinyltransferase (440 aa).

22–23 contributes to the phosphoenolpyruvate binding site; the sequence is KN. R102 serves as a coordination point for UDP-N-acetyl-alpha-D-glucosamine. C126 serves as the catalytic Proton donor. C126 bears the 2-(S-cysteinyl)pyruvic acid O-phosphothioketal mark. UDP-N-acetyl-alpha-D-glucosamine-binding positions include 131-135, D320, and I342; that span reads RPVDQ.

The protein belongs to the EPSP synthase family. MurA subfamily.

The protein localises to the cytoplasm. It catalyses the reaction phosphoenolpyruvate + UDP-N-acetyl-alpha-D-glucosamine = UDP-N-acetyl-3-O-(1-carboxyvinyl)-alpha-D-glucosamine + phosphate. The protein operates within cell wall biogenesis; peptidoglycan biosynthesis. Its function is as follows. Cell wall formation. Adds enolpyruvyl to UDP-N-acetylglucosamine. The sequence is that of UDP-N-acetylglucosamine 1-carboxyvinyltransferase from Acidovorax ebreus (strain TPSY) (Diaphorobacter sp. (strain TPSY)).